The following is a 271-amino-acid chain: MSLENIINEAFENRAQISPGTVGAEVREAVAEALRLLDSGAARVAEKKDGGWVVNQWLKKAVLLSFRINDNRVMDGGETRYFDKVEPKFGGFGPEEFRAAGVRVVPPAAVRRGAYIAPGVILMPSYVNIGAYVDSGTMVDTWATVGSCAQIGKNVHLSGGVGIGGVLEPLQAGPTIIEDNCFIGARSEIVEGVIVEEGSVISMGVYIGQSTKIYNRMTGEISYGRVPAGSVVVSGNLPARDGSHSLYCAVIIKQVDEKTRGKVGINELLRD.

Substrate is bound by residues Arg-103 and Asp-140.

This sequence belongs to the transferase hexapeptide repeat family. As to quaternary structure, homotrimer.

The protein localises to the cytoplasm. The catalysed reaction is (S)-2,3,4,5-tetrahydrodipicolinate + succinyl-CoA + H2O = (S)-2-succinylamino-6-oxoheptanedioate + CoA. Its pathway is amino-acid biosynthesis; L-lysine biosynthesis via DAP pathway; LL-2,6-diaminopimelate from (S)-tetrahydrodipicolinate (succinylase route): step 1/3. The chain is 2,3,4,5-tetrahydropyridine-2,6-dicarboxylate N-succinyltransferase from Methylococcus capsulatus (strain ATCC 33009 / NCIMB 11132 / Bath).